Consider the following 250-residue polypeptide: Probable transcriptional regulatory protein ROP_68700 (250 aa).

It belongs to the TACO1 family.

It localises to the cytoplasm. The chain is Probable transcriptional regulatory protein ROP_68700 from Rhodococcus opacus (strain B4).